An 80-amino-acid polypeptide reads, in one-letter code: Kappa-actitoxin-Avd4f (80 aa).

Residues 1–19 form the signal peptide; sequence MNKALFLCLVVLCAAVVFA. The propeptide occupies 20–31; the sequence is AEDLQKAKHAPF. 3 cysteine pairs are disulfide-bonded: Cys-41–Cys-76, Cys-43–Cys-69, and Cys-59–Cys-77.

The protein belongs to the sea anemone type 3 (BDS) potassium channel toxin family. As to expression, moderately expressed in the ectodermal tissue from the distal and proximal tentacles, body wall, and oral disk.

Its subcellular location is the secreted. It localises to the nematocyst. Functionally, blocks Kv3 voltage-gated potassium channels. Reduces blood pressure. This Anemonia viridis (Snakelocks anemone) protein is Kappa-actitoxin-Avd4f.